The chain runs to 200 residues: MKKIVLATGNQGKVREMADLLSDFGFEVLAQSEFNVSEVAETGTTFIENAIIKARHAAQETGLPAIADDSGLEVDFLKGAPGIYSARYAGEKASDQENLEKLLAAMEGVPEAERTARFHCVLVLMRHENDPTPIVCHGKWEGRILTEAHGENGFGYDPIFFVPEDNCASAELEPARKKQLSHRGKALKSLFAQLSAQTAQ.

Substrate is bound at residue 8 to 13 (TGNQGK). Catalysis depends on D69, which acts as the Proton acceptor. D69 lines the Mg(2+) pocket. Substrate is bound by residues S70, 154–157 (FGYD), K177, and 182–183 (HR).

This sequence belongs to the HAM1 NTPase family. In terms of assembly, homodimer. The cofactor is Mg(2+).

It carries out the reaction XTP + H2O = XMP + diphosphate + H(+). The catalysed reaction is dITP + H2O = dIMP + diphosphate + H(+). The enzyme catalyses ITP + H2O = IMP + diphosphate + H(+). Functionally, pyrophosphatase that catalyzes the hydrolysis of nucleoside triphosphates to their monophosphate derivatives, with a high preference for the non-canonical purine nucleotides XTP (xanthosine triphosphate), dITP (deoxyinosine triphosphate) and ITP. Seems to function as a house-cleaning enzyme that removes non-canonical purine nucleotides from the nucleotide pool, thus preventing their incorporation into DNA/RNA and avoiding chromosomal lesions. In Vibrio parahaemolyticus serotype O3:K6 (strain RIMD 2210633), this protein is dITP/XTP pyrophosphatase.